Consider the following 99-residue polypeptide: Plastocyanin (99 aa).

The region spanning 1–99 (IEVLLGGGDG…AGMVGKVTVN (99 aa)) is the Plastocyanin-like domain. The Cu cation site is built by His37, Cys84, His87, and Met92.

It belongs to the plastocyanin family. The cofactor is Cu(2+).

It localises to the plastid. It is found in the chloroplast thylakoid membrane. Functionally, participates in electron transfer between P700 and the cytochrome b6-f complex in photosystem I. The chain is Plastocyanin (PETE) from Capsella bursa-pastoris (Shepherd's purse).